We begin with the raw amino-acid sequence, 417 residues long: Serine/threonine-protein kinase SBK1 (417 aa).

The region spanning 53–318 is the Protein kinase domain; the sequence is YELVRELGKG…VFRFLKHELT (266 aa). ATP is bound by residues 59–67 and K82; that span reads LGKGTYGKV. D174 acts as the Proton acceptor in catalysis. The disordered stretch occupies residues 321–405; that stretch reads LRRRPSHRAR…TDGRTDKSKG (85 aa). The segment covering 363–382 has biased composition (pro residues); the sequence is PSPPSVGPVVPVPVPVPVPV.

Belongs to the protein kinase superfamily. Ser/Thr protein kinase family.

Its subcellular location is the cytoplasm. The catalysed reaction is L-seryl-[protein] + ATP = O-phospho-L-seryl-[protein] + ADP + H(+). The enzyme catalyses L-threonyl-[protein] + ATP = O-phospho-L-threonyl-[protein] + ADP + H(+). May be involved in signal-transduction pathways related to the control of brain development. The chain is Serine/threonine-protein kinase SBK1 (Sbk1) from Mus musculus (Mouse).